The primary structure comprises 119 residues: Multidrug resistance protein EbrB (119 aa).

4 helical membrane passes run 3–23 (GMIF…MLKL), 31–51 (LPAA…SFSL), 59–79 (AYAT…HFIF), and 81–101 (EPFN…VFLL).

This sequence belongs to the drug/metabolite transporter (DMT) superfamily. Small multidrug resistance (SMR) (TC 2.A.7.1) family. EbrA/EbrB subfamily. The efflux pump is composed of EbrA and EbrB.

Its subcellular location is the cell membrane. In terms of biological role, part of a multidrug efflux pump. Confers resistance to cationic lipophilic dyes such as ethidium bromide, acriflavine, pyronine Y and safranin O. The efflux is probably coupled to an influx of protons. The sequence is that of Multidrug resistance protein EbrB (ebrB) from Bacillus licheniformis (strain ATCC 14580 / DSM 13 / JCM 2505 / CCUG 7422 / NBRC 12200 / NCIMB 9375 / NCTC 10341 / NRRL NRS-1264 / Gibson 46).